The following is a 248-amino-acid chain: Probable transcriptional regulatory protein P9303_05381 (248 aa).

The protein belongs to the TACO1 family.

The protein resides in the cytoplasm. This is Probable transcriptional regulatory protein P9303_05381 from Prochlorococcus marinus (strain MIT 9303).